We begin with the raw amino-acid sequence, 98 residues long: NADH-ubiquinone oxidoreductase chain 4L (98 aa).

The next 3 helical transmembrane spans lie at 1-21 (MSLV…GLLM), 29-49 (ALLC…LTIL), and 61-81 (IILL…LVMI).

The protein belongs to the complex I subunit 4L family. Core subunit of respiratory chain NADH dehydrogenase (Complex I) which is composed of 45 different subunits.

It localises to the mitochondrion inner membrane. It carries out the reaction a ubiquinone + NADH + 5 H(+)(in) = a ubiquinol + NAD(+) + 4 H(+)(out). Its function is as follows. Core subunit of the mitochondrial membrane respiratory chain NADH dehydrogenase (Complex I) which catalyzes electron transfer from NADH through the respiratory chain, using ubiquinone as an electron acceptor. Part of the enzyme membrane arm which is embedded in the lipid bilayer and involved in proton translocation. In Delphinapterus leucas (Beluga whale), this protein is NADH-ubiquinone oxidoreductase chain 4L (MT-ND4L).